The following is a 186-amino-acid chain: ADP-ribosylation factor-like protein 6 (186 aa).

The N-myristoyl glycine moiety is linked to residue Gly2. Residues 24 to 31 (GLDNSGKT), Thr50, 69 to 73 (DMSGQ), Gly72, 130 to 133 (NKMD), and Ala164 contribute to the GTP site. Mg(2+) is bound by residues Thr31 and Thr50.

This sequence belongs to the small GTPase superfamily. Arf family. As to quaternary structure, interacts with SEC61B, ARL6IP1, ARL6IP2, ARL6IP3, ARL6IP4 ARL6IP5 and ARL6IP6. Interacts (GTP-bound form) with the BBSome a complex that contains BBS1, BBS2, BBS4, BBS5, BBS7, BBS8/TTC8, BBS9 and BBIP10. Interacts (GTP-free form) with IFT27.

It localises to the cell projection. The protein localises to the cilium membrane. The protein resides in the cytoplasm. Its subcellular location is the cytoskeleton. It is found in the cilium axoneme. It localises to the cilium basal body. Its function is as follows. Involved in membrane protein trafficking at the base of the ciliary organelle. Mediates recruitment onto plasma membrane of the BBSome complex which would constitute a coat complex required for sorting of specific membrane proteins to the primary cilia. Together with BBS1, is necessary for correct trafficking of PKD1 to primary cilia. Together with the BBSome complex and LTZL1, controls SMO ciliary trafficking and contributes to the sonic hedgehog (SHH) pathway regulation. May regulate cilia assembly and disassembly and subsequent ciliary signaling events such as the Wnt signaling cascade. Isoform 2 may be required for proper retinal function and organization. The polypeptide is ADP-ribosylation factor-like protein 6 (ARL6) (Homo sapiens (Human)).